Here is a 176-residue protein sequence, read N- to C-terminus: SFSHIWVQFVFHGVAGAGWQPLVRPPRLGGNRKMGVFATRSPFRPNPLGLSLLKLERIETEGGVRLWCGGADLLDGTPVLDIKPYLPFVEAQPDAAPGFAAVPPVPLEVAWADEISAASLPPPNRLLIEQSIAQDPRPAYQDTPQRVYKMAVDDWEVAFRIEKGMALIEAVMAVEG.

One can recognise a TsaA-like domain in the interval 1–94; sequence SFSHIWVQFV…YLPFVEAQPD (94 aa). S-adenosyl-L-methionine contacts are provided by residues His-12, 12–13, Arg-40, Leu-50, and 74–77; these read HG and LDGT.

The protein belongs to the tRNA methyltransferase O family.

The enzyme catalyses N(6)-L-threonylcarbamoyladenosine(37) in tRNA + S-adenosyl-L-methionine = N(6)-methyl,N(6)-L-threonylcarbamoyladenosine(37) in tRNA + S-adenosyl-L-homocysteine + H(+). Its function is as follows. S-adenosyl-L-methionine-dependent methyltransferase responsible for the addition of the methyl group in the formation of N6-methyl-N6-threonylcarbamoyladenosine at position 37 (m(6)t(6)A37) of the tRNA anticodon loop of tRNA(Thr)(GGU). The methyl group of m(6)t(6)A37 appears to slightly improve the efficiency of the tRNA decoding ability. Binds to tRNA. The protein is tRNA (adenine(37)-N6)-methyltransferase of Eikenella corrodens.